Reading from the N-terminus, the 280-residue chain is Pantothenate synthetase (280 aa).

Met26–His33 contributes to the ATP binding site. His33 acts as the Proton donor in catalysis. Gln57 is a (R)-pantoate binding site. Residue Gln57 coordinates beta-alanine. Gly145–Asp148 is a binding site for ATP. Residue Gln151 coordinates (R)-pantoate. Residues Val174 and Leu182–Arg185 contribute to the ATP site.

It belongs to the pantothenate synthetase family. In terms of assembly, homodimer.

The protein localises to the cytoplasm. It carries out the reaction (R)-pantoate + beta-alanine + ATP = (R)-pantothenate + AMP + diphosphate + H(+). Its pathway is cofactor biosynthesis; (R)-pantothenate biosynthesis; (R)-pantothenate from (R)-pantoate and beta-alanine: step 1/1. Its function is as follows. Catalyzes the condensation of pantoate with beta-alanine in an ATP-dependent reaction via a pantoyl-adenylate intermediate. The sequence is that of Pantothenate synthetase from Bordetella avium (strain 197N).